A 113-amino-acid chain; its full sequence is Prefoldin subunit beta (113 aa).

Belongs to the prefoldin subunit beta family. Heterohexamer of two alpha and four beta subunits.

The protein resides in the cytoplasm. Molecular chaperone capable of stabilizing a range of proteins. Seems to fulfill an ATP-independent, HSP70-like function in archaeal de novo protein folding. This is Prefoldin subunit beta (pfdB) from Methanocaldococcus jannaschii (strain ATCC 43067 / DSM 2661 / JAL-1 / JCM 10045 / NBRC 100440) (Methanococcus jannaschii).